We begin with the raw amino-acid sequence, 317 residues long: Apolipoprotein E (317 aa).

The first 18 residues, 1–18 (MKVLWAALLVTFLAGCQA), serve as a signal peptide directing secretion. 8 tandem repeats follow at residues 80-101 (TLMD…EQLS), 102-123 (PVAE…ARLG), 124-145 (ADME…AMLG), 146-167 (QSTE…KRLL), 168-189 (RDAD…EGAE), 190-211 (RGVS…VRAA), 212-233 (TVGS…ERLR), and 234-255 (ARME…EQVA). The segment at 80-255 (TLMDETMKEL…RLDEVKEQVA (176 aa)) is 8 X 22 AA approximate tandem repeats. Met143 is subject to Methionine sulfoxide. Residue Ser147 is modified to Phosphoserine. Residues 158–168 (HLRKLRKRLLR) form an LDL and other lipoprotein receptors binding region. Heparin is bound at residue 162 to 165 (LRKR). The segment at 210–290 (AATVGSLASQ…SWFEPLVEDM (81 aa)) is lipid-binding and lipoprotein association. Residue 229–236 (GERLRARM) coordinates heparin. Residues 266–317 (QQISLQAEAFQARLKSWFEPLVEDMQRQWAGLVEKVQAAVGASTAPVPSDNH) are homooligomerization. The interval 278–290 (RLKSWFEPLVEDM) is specificity for association with VLDL.

Belongs to the apolipoprotein A1/A4/E family. In terms of assembly, homotetramer. May interact with ABCA1; functionally associated with ABCA1 in the biogenesis of HDLs. May interact with APP/A4 amyloid-beta peptide; the interaction is extremely stable in vitro but its physiological significance is unclear. May interact with MAPT. May interact with MAP2. In the cerebrospinal fluid, interacts with secreted SORL1. Interacts with PMEL; this allows the loading of PMEL luminal fragment on ILVs to induce fibril nucleation. Post-translationally, APOE exists as multiple glycosylated and sialylated glycoforms within cells and in plasma. The extent of glycosylation and sialylation are tissue and context specific. Glycated in plasma VLDL. In terms of processing, phosphorylated by FAM20C in the extracellular medium.

Its subcellular location is the secreted. The protein resides in the extracellular space. It localises to the extracellular matrix. It is found in the extracellular vesicle. The protein localises to the endosome. Its subcellular location is the multivesicular body. Its function is as follows. APOE is an apolipoprotein, a protein associating with lipid particles, that mainly functions in lipoprotein-mediated lipid transport between organs via the plasma and interstitial fluids. APOE is a core component of plasma lipoproteins and is involved in their production, conversion and clearance. Apolipoproteins are amphipathic molecules that interact both with lipids of the lipoprotein particle core and the aqueous environment of the plasma. As such, APOE associates with chylomicrons, chylomicron remnants, very low density lipoproteins (VLDL) and intermediate density lipoproteins (IDL) but shows a preferential binding to high-density lipoproteins (HDL). It also binds a wide range of cellular receptors including the LDL receptor/LDLR, the LDL receptor-related proteins LRP1, LRP2 and LRP8 and the very low-density lipoprotein receptor/VLDLR that mediate the cellular uptake of the APOE-containing lipoprotein particles. Finally, APOE also has a heparin-binding activity and binds heparan-sulfate proteoglycans on the surface of cells, a property that supports the capture and the receptor-mediated uptake of APOE-containing lipoproteins by cells. A main function of APOE is to mediate lipoprotein clearance through the uptake of chylomicrons, VLDLs, and HDLs by hepatocytes. APOE is also involved in the biosynthesis by the liver of VLDLs as well as their uptake by peripheral tissues ensuring the delivery of triglycerides and energy storage in muscle, heart and adipose tissues. By participating in the lipoprotein-mediated distribution of lipids among tissues, APOE plays a critical role in plasma and tissues lipid homeostasis. APOE is also involved in two steps of reverse cholesterol transport, the HDLs-mediated transport of cholesterol from peripheral tissues to the liver, and thereby plays an important role in cholesterol homeostasis. First, it is functionally associated with ABCA1 in the biogenesis of HDLs in tissues. Second, it is enriched in circulating HDLs and mediates their uptake by hepatocytes. APOE also plays an important role in lipid transport in the central nervous system, regulating neuron survival and sprouting. In Papio anubis (Olive baboon), this protein is Apolipoprotein E (APOE).